A 114-amino-acid polypeptide reads, in one-letter code: Pole-localizer protein TmaR (114 aa).

Positions Arg70 to Asn111 form a coiled coil. The disordered stretch occupies residues Lys89 to Lys114.

It belongs to the pole-localizer TmaR family.

It localises to the cytoplasm. Pole-localizer protein involved in the regulation of several cellular processes. This Haemophilus influenzae (strain PittEE) protein is Pole-localizer protein TmaR.